Here is a 555-residue protein sequence, read N- to C-terminus: CTP synthase (555 aa).

Positions 1 to 272 are amidoligase domain; the sequence is MQPTSTTTKH…DAYVVRKLDL (272 aa). Ser-19 provides a ligand contact to CTP. UTP is bound at residue Ser-19. ATP-binding positions include 20–25 and Asp-77; that span reads SLGKGL. The Mg(2+) site is built by Asp-77 and Glu-146. Residues 153–155, 193–198, and Lys-229 each bind CTP; these read DIE and KTKPTQ. Residues 193–198 and Lys-229 each bind UTP; that span reads KTKPTQ. A Glutamine amidotransferase type-1 domain is found at 297–548; that stretch reads TVALVGKYID…VKAAVARQVA (252 aa). Gly-360 provides a ligand contact to L-glutamine. Cys-387 acts as the Nucleophile; for glutamine hydrolysis in catalysis. L-glutamine is bound by residues 388 to 391, Glu-411, and Arg-473; that span reads LGLQ. Catalysis depends on residues His-521 and Glu-523.

This sequence belongs to the CTP synthase family. Homotetramer.

The enzyme catalyses UTP + L-glutamine + ATP + H2O = CTP + L-glutamate + ADP + phosphate + 2 H(+). It carries out the reaction L-glutamine + H2O = L-glutamate + NH4(+). The catalysed reaction is UTP + NH4(+) + ATP = CTP + ADP + phosphate + 2 H(+). It participates in pyrimidine metabolism; CTP biosynthesis via de novo pathway; CTP from UDP: step 2/2. With respect to regulation, allosterically activated by GTP, when glutamine is the substrate; GTP has no effect on the reaction when ammonia is the substrate. The allosteric effector GTP functions by stabilizing the protein conformation that binds the tetrahedral intermediate(s) formed during glutamine hydrolysis. Inhibited by the product CTP, via allosteric rather than competitive inhibition. Functionally, catalyzes the ATP-dependent amination of UTP to CTP with either L-glutamine or ammonia as the source of nitrogen. Regulates intracellular CTP levels through interactions with the four ribonucleotide triphosphates. The chain is CTP synthase from Streptomyces griseus subsp. griseus (strain JCM 4626 / CBS 651.72 / NBRC 13350 / KCC S-0626 / ISP 5235).